The chain runs to 121 residues: Small ribosomal subunit protein uS13 (121 aa).

The segment at 97–121 (VRGQRTRTNARTRRGARKTVAGKKK) is disordered. The span at 100–121 (QRTRTNARTRRGARKTVAGKKK) shows a compositional bias: basic residues.

This sequence belongs to the universal ribosomal protein uS13 family. As to quaternary structure, part of the 30S ribosomal subunit. Forms a loose heterodimer with protein S19. Forms two bridges to the 50S subunit in the 70S ribosome.

Functionally, located at the top of the head of the 30S subunit, it contacts several helices of the 16S rRNA. In the 70S ribosome it contacts the 23S rRNA (bridge B1a) and protein L5 of the 50S subunit (bridge B1b), connecting the 2 subunits; these bridges are implicated in subunit movement. Contacts the tRNAs in the A and P-sites. This chain is Small ribosomal subunit protein uS13, found in Synechococcus sp. (strain WH7803).